Here is a 564-residue protein sequence, read N- to C-terminus: O-fucosyltransferase 6 (564 aa).

A helical; Signal-anchor for type II membrane protein transmembrane segment spans residues 17–37; it reads LLPFICAVSGALLILFALLSI. N-linked (GlcNAc...) asparagine glycans are attached at residues asparagine 95 and asparagine 139. Residue 277-279 participates in substrate binding; that stretch reads HLR. Residue asparagine 449 is glycosylated (N-linked (GlcNAc...) asparagine). The span at 501 to 512 shows a compositional bias: basic and acidic residues; sequence MDSRKFGKKEQK. Residues 501–542 are disordered; sequence MDSRKFGKKEQKEDEDAELSSSETDYEEDQTDLQDRGLYNGT. Residues 513-532 are compositionally biased toward acidic residues; it reads EDEDAELSSSETDYEEDQTD. N-linked (GlcNAc...) asparagine glycosylation is present at asparagine 540.

It belongs to the glycosyltransferase GT106 family.

The protein localises to the membrane. It participates in glycan metabolism. The protein is O-fucosyltransferase 6 of Arabidopsis thaliana (Mouse-ear cress).